Reading from the N-terminus, the 163-residue chain is Phosphopantetheine adenylyltransferase (163 aa).

Residue T11 participates in substrate binding. ATP is bound by residues T11–F12 and H19. 3 residues coordinate substrate: K43, L75, and R89. Residues G90 to R92, E100, and Y125 to T131 each bind ATP.

Belongs to the bacterial CoaD family. Homohexamer. It depends on Mg(2+) as a cofactor.

It is found in the cytoplasm. The catalysed reaction is (R)-4'-phosphopantetheine + ATP + H(+) = 3'-dephospho-CoA + diphosphate. Its pathway is cofactor biosynthesis; coenzyme A biosynthesis; CoA from (R)-pantothenate: step 4/5. Functionally, reversibly transfers an adenylyl group from ATP to 4'-phosphopantetheine, yielding dephospho-CoA (dPCoA) and pyrophosphate. The polypeptide is Phosphopantetheine adenylyltransferase (Azoarcus sp. (strain BH72)).